We begin with the raw amino-acid sequence, 283 residues long: Thymidylate synthase (283 aa).

Residue Arg22 coordinates dUMP. The Nucleophile role is filled by Cys160. Residues 180 to 183 (RSCD), Asn191, and 221 to 223 (HIY) contribute to the dUMP site. Position 183 (Asp183) interacts with (6R)-5,10-methylene-5,6,7,8-tetrahydrofolate. Ala282 is a binding site for (6R)-5,10-methylene-5,6,7,8-tetrahydrofolate.

Belongs to the thymidylate synthase family. Bacterial-type ThyA subfamily. In terms of assembly, homodimer.

It localises to the cytoplasm. It catalyses the reaction dUMP + (6R)-5,10-methylene-5,6,7,8-tetrahydrofolate = 7,8-dihydrofolate + dTMP. Its pathway is pyrimidine metabolism; dTTP biosynthesis. In terms of biological role, catalyzes the reductive methylation of 2'-deoxyuridine-5'-monophosphate (dUMP) to 2'-deoxythymidine-5'-monophosphate (dTMP) while utilizing 5,10-methylenetetrahydrofolate (mTHF) as the methyl donor and reductant in the reaction, yielding dihydrofolate (DHF) as a by-product. This enzymatic reaction provides an intracellular de novo source of dTMP, an essential precursor for DNA biosynthesis. This chain is Thymidylate synthase, found in Colwellia psychrerythraea (strain 34H / ATCC BAA-681) (Vibrio psychroerythus).